We begin with the raw amino-acid sequence, 541 residues long: Chaperonin GroEL 1 (541 aa).

ATP-binding positions include 29–32 (TLGP), 86–90 (DGTTT), Gly413, and Asp492.

This sequence belongs to the chaperonin (HSP60) family. Forms a cylinder of 14 subunits composed of two heptameric rings stacked back-to-back. Interacts with the co-chaperonin GroES.

The protein localises to the cytoplasm. The enzyme catalyses ATP + H2O + a folded polypeptide = ADP + phosphate + an unfolded polypeptide.. Its function is as follows. Together with its co-chaperonin GroES, plays an essential role in assisting protein folding. The GroEL-GroES system forms a nano-cage that allows encapsulation of the non-native substrate proteins and provides a physical environment optimized to promote and accelerate protein folding. The chain is Chaperonin GroEL 1 from Rhodococcus jostii (strain RHA1).